Consider the following 364-residue polypeptide: Mannitol-1-phosphate 5-dehydrogenase (364 aa).

V6–G17 serves as a coordination point for NAD(+).

Belongs to the mannitol dehydrogenase family.

The catalysed reaction is D-mannitol 1-phosphate + NAD(+) = beta-D-fructose 6-phosphate + NADH + H(+). The sequence is that of Mannitol-1-phosphate 5-dehydrogenase (mtlD) from Mycoplasma pneumoniae (strain ATCC 29342 / M129 / Subtype 1) (Mycoplasmoides pneumoniae).